The sequence spans 51 residues: Small ribosomal subunit protein eS31 (51 aa).

The Zn(2+) site is built by Cys21, Cys24, Cys39, and Cys42. Residues Cys21–Cys42 form a C4-type zinc finger.

Belongs to the eukaryotic ribosomal protein eS31 family. In terms of assembly, part of the 30S ribosomal subunit. The cofactor is Zn(2+).

This chain is Small ribosomal subunit protein eS31, found in Methanothermobacter thermautotrophicus (strain ATCC 29096 / DSM 1053 / JCM 10044 / NBRC 100330 / Delta H) (Methanobacterium thermoautotrophicum).